Reading from the N-terminus, the 244-residue chain is Phosphoadenosine 5'-phosphosulfate reductase (244 aa).

The Nucleophile; cysteine thiosulfonate intermediate role is filled by Cys-239.

Belongs to the PAPS reductase family. CysH subfamily.

The protein resides in the cytoplasm. It catalyses the reaction [thioredoxin]-disulfide + sulfite + adenosine 3',5'-bisphosphate + 2 H(+) = [thioredoxin]-dithiol + 3'-phosphoadenylyl sulfate. It functions in the pathway sulfur metabolism; hydrogen sulfide biosynthesis; sulfite from sulfate: step 3/3. Functionally, catalyzes the formation of sulfite from phosphoadenosine 5'-phosphosulfate (PAPS) using thioredoxin as an electron donor. In Escherichia coli O8 (strain IAI1), this protein is Phosphoadenosine 5'-phosphosulfate reductase.